Here is a 934-residue protein sequence, read N- to C-terminus: Glycine dehydrogenase (decarboxylating) (934 aa).

Position 687 is an N6-(pyridoxal phosphate)lysine (lysine 687).

It belongs to the GcvP family. As to quaternary structure, the glycine cleavage system is composed of four proteins: P, T, L and H. Pyridoxal 5'-phosphate serves as cofactor.

The catalysed reaction is N(6)-[(R)-lipoyl]-L-lysyl-[glycine-cleavage complex H protein] + glycine + H(+) = N(6)-[(R)-S(8)-aminomethyldihydrolipoyl]-L-lysyl-[glycine-cleavage complex H protein] + CO2. Functionally, the glycine cleavage system catalyzes the degradation of glycine. The P protein binds the alpha-amino group of glycine through its pyridoxal phosphate cofactor; CO(2) is released and the remaining methylamine moiety is then transferred to the lipoamide cofactor of the H protein. The polypeptide is Glycine dehydrogenase (decarboxylating) (Nocardia farcinica (strain IFM 10152)).